The chain runs to 395 residues: MANDYLFTSESVSEGHPDKVADQISDAILDAILEQDKYSRVAAETLCNTGLVVLAGEITTTANIDYIQIARDTIKRIGYDNTDYGIDYKGCAVLVAYDKQSPDIAQGVDRAHDDNLDQGAGDQGLMFGYACDETPELMPLPIYLSHRLVERQASLRRDGRLQWLRPDAKSQVTVRYVDGKPHSIDTVVLSTQHAPDIELPALREAVIEEIIKPTLPADLIKGDIKFLVNPTGRFVIGGPQGDCGLTGRKIIVDTYGGAAPHGGGAFSGKDPSKVDRSAAYAGRYVAKNIVAAGLASRALIQVSYAIGVAEPTSVMVNTFGTGRVSDAVITKLVREHFDLRPKGIIKMLDLLRPIYEKTAAYGHFGREEPEFSWEATDKALALAEAAGVEPTARVA.

Histidine 16 serves as a coordination point for ATP. Aspartate 18 is a Mg(2+) binding site. Glutamate 44 contributes to the K(+) binding site. Residues glutamate 57 and glutamine 100 each coordinate L-methionine. The segment at 100 to 110 (QSPDIAQGVDR) is flexible loop. ATP is bound by residues 167–169 (DAK), 233–234 (RF), aspartate 242, 248–249 (RK), alanine 265, and lysine 269. Aspartate 242 provides a ligand contact to L-methionine. Lysine 273 contributes to the L-methionine binding site.

Belongs to the AdoMet synthase family. Homotetramer; dimer of dimers. Requires Mg(2+) as cofactor. The cofactor is K(+).

The protein resides in the cytoplasm. The enzyme catalyses L-methionine + ATP + H2O = S-adenosyl-L-methionine + phosphate + diphosphate. Its pathway is amino-acid biosynthesis; S-adenosyl-L-methionine biosynthesis; S-adenosyl-L-methionine from L-methionine: step 1/1. Catalyzes the formation of S-adenosylmethionine (AdoMet) from methionine and ATP. The overall synthetic reaction is composed of two sequential steps, AdoMet formation and the subsequent tripolyphosphate hydrolysis which occurs prior to release of AdoMet from the enzyme. This is S-adenosylmethionine synthase from Burkholderia lata (strain ATCC 17760 / DSM 23089 / LMG 22485 / NCIMB 9086 / R18194 / 383).